A 97-amino-acid polypeptide reads, in one-letter code: Large ribosomal subunit protein bL36m (97 aa).

The protein belongs to the bacterial ribosomal protein bL36 family. Component of the mitochondrial ribosome large subunit (39S) which comprises a 16S rRNA and about 50 distinct proteins.

The protein resides in the mitochondrion. This Rattus norvegicus (Rat) protein is Large ribosomal subunit protein bL36m (Mrpl36).